The primary structure comprises 184 residues: ATP synthase subunit b, chloroplastic (184 aa).

Residues 27 to 49 (FATNPINLSVVLGVLIFFGKGVL) traverse the membrane as a helical segment.

This sequence belongs to the ATPase B chain family. F-type ATPases have 2 components, F(1) - the catalytic core - and F(0) - the membrane proton channel. F(1) has five subunits: alpha(3), beta(3), gamma(1), delta(1), epsilon(1). F(0) has four main subunits: a(1), b(1), b'(1) and c(10-14). The alpha and beta chains form an alternating ring which encloses part of the gamma chain. F(1) is attached to F(0) by a central stalk formed by the gamma and epsilon chains, while a peripheral stalk is formed by the delta, b and b' chains.

It is found in the plastid. The protein resides in the chloroplast thylakoid membrane. F(1)F(0) ATP synthase produces ATP from ADP in the presence of a proton or sodium gradient. F-type ATPases consist of two structural domains, F(1) containing the extramembraneous catalytic core and F(0) containing the membrane proton channel, linked together by a central stalk and a peripheral stalk. During catalysis, ATP synthesis in the catalytic domain of F(1) is coupled via a rotary mechanism of the central stalk subunits to proton translocation. Functionally, component of the F(0) channel, it forms part of the peripheral stalk, linking F(1) to F(0). The sequence is that of ATP synthase subunit b, chloroplastic from Ipomoea purpurea (Common morning glory).